The sequence spans 679 residues: E3 ubiquitin ligase RNF157 (679 aa).

Glycine 2 carries N-myristoyl glycine lipidation. The segment at cysteine 277–arginine 316 adopts an RING-type zinc-finger fold. Positions arginine 329 to leucine 332 match the D-box 1 motif. 2 stretches are compositionally biased toward polar residues: residues serine 339–serine 349 and glutamate 478–glycine 537. Disordered stretches follow at residues serine 339–proline 362, leucine 416–glycine 604, and valine 650–valine 679. Positions glutamine 585 to glycine 598 are enriched in acidic residues. Residues arginine 656–leucine 659 carry the D-box 2 motif. Phosphoserine is present on residues serine 660, serine 661, serine 662, and serine 663.

Interacts with APBB1. Interacts with CHD1; CHD1-binding controls RNF157 stability. Interacts with ATRN, MEGF8, TECR, MSI2, PLRG1, BYSL, MTERF3, PSMA1, MRPS18B, PRPF4, FASTKD2, SLC25A1, SMU1, CNOT9, MRPS2, MAGT1, FXR2, EMD, PSMD8, HDAC1, RAN, HSD17B12, TXNDC5 and MRPL19. Phosphorylation at Ser-660, Ser-661, Ser-662 and Ser-663 downstream of the PI3K and MAPK pathways influences the E3 ligase activity and stability of RNF157 during the cell cycle in an anaphase-promoting complex/cyclosome-CDH1-dependent manner.

Its subcellular location is the cytoplasm. The enzyme catalyses S-ubiquitinyl-[E2 ubiquitin-conjugating enzyme]-L-cysteine + [acceptor protein]-L-lysine = [E2 ubiquitin-conjugating enzyme]-L-cysteine + N(6)-ubiquitinyl-[acceptor protein]-L-lysine.. E3 ubiquitin ligase that ubiquitinates APBB1 for its degradation by the proteasome and thus prevents apoptosis and promotes survival of neurons. Has a dual role in neurons as it is also required for dendrite growth and maintenance for which its ligase activity is not critical. May act as a scaffold molecule to regulate this process. Acts as a downstream effector of the interconnected PI3K and MAPK signaling pathways and thus participates in the regulation of the cell cycle. This is E3 ubiquitin ligase RNF157 (RNF157) from Homo sapiens (Human).